Here is a 500-residue protein sequence, read N- to C-terminus: Trehalose-6-phosphate synthase (500 aa).

Arg28 serves as a coordination point for D-glucose 6-phosphate. Gly48–Gly49 contacts UDP-alpha-D-glucose. Residues Tyr104 and Asp158 each coordinate D-glucose 6-phosphate. UDP-alpha-D-glucose contacts are provided by Arg300 and Lys305. Arg338 serves as a coordination point for D-glucose 6-phosphate. A UDP-alpha-D-glucose-binding site is contributed by Leu403–Glu407.

It belongs to the glycosyltransferase 20 family. As to quaternary structure, homotetramer.

It catalyses the reaction ADP-alpha-D-glucose + D-glucose 6-phosphate = alpha,alpha-trehalose 6-phosphate + ADP + H(+). It carries out the reaction CDP-alpha-D-glucose + D-glucose 6-phosphate = alpha,alpha-trehalose 6-phosphate + CDP + H(+). The enzyme catalyses GDP-alpha-D-glucose + D-glucose 6-phosphate = alpha,alpha-trehalose 6-phosphate + GDP + H(+). The catalysed reaction is TDP-alpha-D-glucose + D-glucose 6-phosphate = 5-methyl-UDP + alpha,alpha-trehalose 6-phosphate + H(+). It catalyses the reaction D-glucose 6-phosphate + UDP-alpha-D-glucose = alpha,alpha-trehalose 6-phosphate + UDP + H(+). Its pathway is glycan biosynthesis; trehalose biosynthesis. Functionally, probably involved in the osmoprotection via the biosynthesis of trehalose and in the production of glycogen and alpha-glucan via the TreS-Pep2 branch involved in the biosynthesis of maltose-1-phosphate (M1P). Catalyzes the transfer of glucose from UDP-glucose (UDP-Glc) to D-glucose 6-phosphate (Glc-6-P) to form trehalose-6-phosphate. Probably also able to use ADP-Glc, CDP-Glc, GDP-Glc and TDP-Glc as glucosyl donors. This is Trehalose-6-phosphate synthase from Mycobacterium ulcerans (strain Agy99).